Consider the following 110-residue polypeptide: Large ribosomal subunit protein uL22 (110 aa).

It belongs to the universal ribosomal protein uL22 family. As to quaternary structure, part of the 50S ribosomal subunit.

In terms of biological role, this protein binds specifically to 23S rRNA; its binding is stimulated by other ribosomal proteins, e.g. L4, L17, and L20. It is important during the early stages of 50S assembly. It makes multiple contacts with different domains of the 23S rRNA in the assembled 50S subunit and ribosome. The globular domain of the protein is located near the polypeptide exit tunnel on the outside of the subunit, while an extended beta-hairpin is found that lines the wall of the exit tunnel in the center of the 70S ribosome. The protein is Large ribosomal subunit protein uL22 of Acidovorax ebreus (strain TPSY) (Diaphorobacter sp. (strain TPSY)).